The following is a 244-amino-acid chain: Na(+)-translocating NADH-quinone reductase subunit E (244 aa).

The next 6 membrane-spanning stretches (helical) occupy residues 11 to 31, 50 to 70, 90 to 110, 123 to 143, 153 to 173, and 191 to 211; these read LLGI…TFLG, MSVA…HYFI, FLEL…LELL, GIFL…LFGI, VVFS…FATI, and ISFI…GIDI.

This sequence belongs to the NqrDE/RnfAE family. Composed of six subunits; NqrA, NqrB, NqrC, NqrD, NqrE and NqrF.

The protein localises to the cell inner membrane. The catalysed reaction is a ubiquinone + n Na(+)(in) + NADH + H(+) = a ubiquinol + n Na(+)(out) + NAD(+). NQR complex catalyzes the reduction of ubiquinone-1 to ubiquinol by two successive reactions, coupled with the transport of Na(+) ions from the cytoplasm to the periplasm. NqrA to NqrE are probably involved in the second step, the conversion of ubisemiquinone to ubiquinol. This Chlamydia trachomatis serovar L2 (strain ATCC VR-902B / DSM 19102 / 434/Bu) protein is Na(+)-translocating NADH-quinone reductase subunit E.